The chain runs to 82 residues: Small ribosomal subunit protein bS18 (82 aa).

Belongs to the bacterial ribosomal protein bS18 family. Part of the 30S ribosomal subunit. Forms a tight heterodimer with protein bS6.

In terms of biological role, binds as a heterodimer with protein bS6 to the central domain of the 16S rRNA, where it helps stabilize the platform of the 30S subunit. This is Small ribosomal subunit protein bS18 from Chlamydia pneumoniae (Chlamydophila pneumoniae).